We begin with the raw amino-acid sequence, 711 residues long: Polyribonucleotide nucleotidyltransferase (711 aa).

An FFRR loop; important for RNA binding region spans residues 77 to 80 (FFRR). The segment at 327–331 (LDVRT) is interaction with RNase E. Residues aspartate 486 and aspartate 492 each coordinate Mg(2+). A KH domain is found at 553–612 (PRIHTIKINPDKIKDVIGKGGSVIRALTEETGTTIEIEDDGTVKIAATDGEKAKHAIRRI). The 69-residue stretch at 622 to 690 (GRVYTGKVTR…RQGRIRLSIK (69 aa)) folds into the S1 motif domain. Residues 689–711 (IKEATEQSQPAAAPEAPAAEQGE) are disordered. The segment covering 694 to 711 (EQSQPAAAPEAPAAEQGE) has biased composition (low complexity).

It belongs to the polyribonucleotide nucleotidyltransferase family. As to quaternary structure, component of the RNA degradosome, which is a multiprotein complex involved in RNA processing and mRNA degradation. Interacts with RNase E (rne). Homotrimer. The homotrimer forms a ring-like structure with a central channel, where RNA molecules can bind. RNA molecules bind between neighboring subunits. Might interact with YicC. It depends on Mg(2+) as a cofactor. The cofactor is Mn(2+).

The protein resides in the cytoplasm. It catalyses the reaction RNA(n+1) + phosphate = RNA(n) + a ribonucleoside 5'-diphosphate. Involved in mRNA degradation. Catalyzes the phosphorolysis of single-stranded polyribonucleotides processively in the 3'- to 5'-direction. Also involved, along with RNase II, in tRNA processing. RNases II and R contribute to rRNA degradation during starvation, while RNase R and PNPase are the major contributors to quality control of rRNA during steady state growth. Contributes to degradation of some small RNAs (sRNA). The polypeptide is Polyribonucleotide nucleotidyltransferase (Escherichia coli (strain K12)).